We begin with the raw amino-acid sequence, 1390 residues long: DNA-directed RNA polymerase subunit beta'' (1390 aa).

Cys-224, Cys-294, Cys-301, and Cys-304 together coordinate Zn(2+).

The protein belongs to the RNA polymerase beta' chain family. RpoC2 subfamily. In plastids the minimal PEP RNA polymerase catalytic core is composed of four subunits: alpha, beta, beta', and beta''. When a (nuclear-encoded) sigma factor is associated with the core the holoenzyme is formed, which can initiate transcription. It depends on Zn(2+) as a cofactor.

Its subcellular location is the plastid. The protein resides in the chloroplast. It carries out the reaction RNA(n) + a ribonucleoside 5'-triphosphate = RNA(n+1) + diphosphate. In terms of biological role, DNA-dependent RNA polymerase catalyzes the transcription of DNA into RNA using the four ribonucleoside triphosphates as substrates. The chain is DNA-directed RNA polymerase subunit beta'' from Ceratophyllum demersum (Rigid hornwort).